A 682-amino-acid chain; its full sequence is Amphiphysin (682 aa).

Coiled coils occupy residues Ala-10–Val-84 and Asp-144–Leu-191. The region spanning Val-24–Asp-240 is the BAR domain. 4 disordered regions span residues Thr-244–Thr-310, Ile-446–Gly-470, Gly-501–Val-530, and Ala-561–Met-606. Residues Pro-261 to Thr-274 show a composition bias toward pro residues. Over residues Val-503 to Gln-527 the composition is skewed to basic and acidic residues. The span at Thr-567 to Pro-596 shows a compositional bias: polar residues. Residues Gly-609 to Glu-682 enclose the SH3 domain.

As to quaternary structure, heterodimer with BIN1. Binds SH3GLB1. As to expression, is abundant in the forebrain and cerebellum. It is also found in the adrenal gland, anterior and posterior pituitary.

The protein localises to the cytoplasmic vesicle. Its subcellular location is the secretory vesicle. It is found in the synaptic vesicle membrane. It localises to the cytoplasm. The protein resides in the cytoskeleton. In terms of biological role, may participate in mechanisms of regulated exocytosis in synapses and certain endocrine cell types. May control the properties of the membrane associated cytoskeleton. The chain is Amphiphysin (AMPH) from Gallus gallus (Chicken).